A 349-amino-acid chain; its full sequence is Green-sensitive opsin-4 (349 aa).

Residues 1 to 36 are Extracellular-facing; the sequence is MNGTEGNNFYIPLSNRTGLARSPYEYPQYYLAEPWQ. N-linked (GlcNAc...) asparagine glycosylation is found at asparagine 2 and asparagine 15. A helical membrane pass occupies residues 37-61; it reads FKLLAVYMFFLICLGFPINGLTLLV. Residues 62-73 lie on the Cytoplasmic side of the membrane; sequence TAQHKKLRQPLN. The chain crosses the membrane as a helical span at residues 74–99; sequence FILVNLAVAGTIMVCFGFTVTFYTAI. The Extracellular segment spans residues 100-113; that stretch reads NGYFVLGPTGCAIE. The cysteines at positions 110 and 187 are disulfide-linked. Residues 114–133 form a helical membrane-spanning segment; the sequence is GFMATLGGEVALWSLVVLAV. Over 134-152 the chain is Cytoplasmic; that stretch reads ERYIVVCKPMGSFKFSASH. A helical membrane pass occupies residues 153–176; sequence AFAGCAFTWVMAMACAAPPLVGWS. Topologically, residues 177-202 are extracellular; that stretch reads RYIPEGMQCSCGPDYYTLNPEYNNES. Asparagine 200 carries N-linked (GlcNAc...) asparagine glycosylation. Residues 203–230 form a helical membrane-spanning segment; it reads YVLYMFICHFILPVTIIFFTYGRLVCTV. The Cytoplasmic portion of the chain corresponds to 231–252; that stretch reads KAAAAQQQESESTQKAEREVTR. A helical transmembrane segment spans residues 253-276; that stretch reads MVILMVLGFLIAWTPYATVAAWIF. Over 277-284 the chain is Extracellular; that stretch reads FNKGAAFS. A helical transmembrane segment spans residues 285 to 309; it reads AQFMAVPAFFSKTSALYNPVIYVLL. Lysine 296 is subject to N6-(retinylidene)lysine. Topologically, residues 310-349 are cytoplasmic; that stretch reads NKQFRNCMLTTLFCGKNPLGDDESSTVSTSKTEVSSVSPA. The interval 329-349 is disordered; the sequence is GDDESSTVSTSKTEVSSVSPA. Positions 334–349 are enriched in low complexity; the sequence is STVSTSKTEVSSVSPA.

Belongs to the G-protein coupled receptor 1 family. Opsin subfamily. In terms of processing, phosphorylated on some or all of the serine and threonine residues present in the C-terminal region. In terms of tissue distribution, retinal double cone accessory photoreceptor cell outer segments.

The protein localises to the membrane. Functionally, visual pigments are the light-absorbing molecules that mediate vision. They consist of an apoprotein, opsin, covalently linked to cis-retinal. This Danio rerio (Zebrafish) protein is Green-sensitive opsin-4 (opn1mw4).